A 163-amino-acid chain; its full sequence is Low molecular weight protein-tyrosine phosphatase A (163 aa).

Residue Cys-11 is the Nucleophile of the active site. Arg-17 is a catalytic residue. The active-site Proton donor is the Asp-126.

This sequence belongs to the low molecular weight phosphotyrosine protein phosphatase family.

It catalyses the reaction O-phospho-L-tyrosyl-[protein] + H2O = L-tyrosyl-[protein] + phosphate. Its function is as follows. Key virulence factor required for mycobacterial survival within host macrophages. Exhibits protein tyrosine phosphatase activity. Supports mycobacteria survival during infection by modulation of the phagosome maturation and modulation of the normal host signaling pathways, including host innate immune responses and cell apoptosis. The sequence is that of Low molecular weight protein-tyrosine phosphatase A (ptpA) from Mycobacterium bovis (strain ATCC BAA-935 / AF2122/97).